We begin with the raw amino-acid sequence, 255 residues long: tRNA (guanine-N(1)-)-methyltransferase (255 aa).

Residues G121 and 141-146 each bind S-adenosyl-L-methionine; that span reads IGDYVL. The disordered stretch occupies residues 236–255; it reads PVKAPNRAGRQKTPKNKTDG. Residues 244 to 255 show a composition bias toward basic residues; sequence GRQKTPKNKTDG.

This sequence belongs to the RNA methyltransferase TrmD family. In terms of assembly, homodimer.

The protein localises to the cytoplasm. It carries out the reaction guanosine(37) in tRNA + S-adenosyl-L-methionine = N(1)-methylguanosine(37) in tRNA + S-adenosyl-L-homocysteine + H(+). Functionally, specifically methylates guanosine-37 in various tRNAs. In Bradyrhizobium diazoefficiens (strain JCM 10833 / BCRC 13528 / IAM 13628 / NBRC 14792 / USDA 110), this protein is tRNA (guanine-N(1)-)-methyltransferase.